A 315-amino-acid polypeptide reads, in one-letter code: Homoserine O-succinyltransferase (315 aa).

Catalysis depends on Cys-142, which acts as the Acyl-thioester intermediate. Positions 163 and 192 each coordinate substrate. His-235 serves as the catalytic Proton acceptor. Residue Glu-237 is part of the active site. Arg-249 serves as a coordination point for substrate. Over residues 249-258 the composition is skewed to basic and acidic residues; it reads RDCEKSDNAP. The tract at residues 249–271 is disordered; sequence RDCEKSDNAPKPENYFPDDDATK.

This sequence belongs to the MetA family.

It localises to the cytoplasm. It carries out the reaction L-homoserine + succinyl-CoA = O-succinyl-L-homoserine + CoA. It participates in amino-acid biosynthesis; L-methionine biosynthesis via de novo pathway; O-succinyl-L-homoserine from L-homoserine: step 1/1. Functionally, transfers a succinyl group from succinyl-CoA to L-homoserine, forming succinyl-L-homoserine. In Pseudoalteromonas translucida (strain TAC 125), this protein is Homoserine O-succinyltransferase.